The following is a 133-amino-acid chain: MKLLRFLVLSPSGIKLDKTIISAQVKTTEGYIGLNFNRAPLIAAIQSHLCKIIFADQTKREAIIGAGLMLIKKTEAKIFTENFVFADEVDINETLKRKTELERKIHHIKDAKLNVKIEQNLMFELLKLSSKKK.

This sequence belongs to the ATPase epsilon chain family. In terms of assembly, F-type ATPases have 2 components, CF(1) - the catalytic core - and CF(0) - the membrane proton channel. CF(1) has five subunits: alpha(3), beta(3), gamma(1), delta(1), epsilon(1). CF(0) has three main subunits: a, b and c.

The protein localises to the cell membrane. Functionally, produces ATP from ADP in the presence of a proton gradient across the membrane. This is ATP synthase epsilon chain (atpC) from Mycoplasma genitalium (strain ATCC 33530 / DSM 19775 / NCTC 10195 / G37) (Mycoplasmoides genitalium).